We begin with the raw amino-acid sequence, 170 residues long: ATP synthase subunit b (170 aa).

A helical transmembrane segment spans residues 15–37; it reads FNLFETNILNWAVVIFGLYKFLP. Residues 72–98 are disordered; it reads AKKDLSSAEEKASQIKADSLKRSESIR.

The protein belongs to the ATPase B chain family. As to quaternary structure, F-type ATPases have 2 components, F(1) - the catalytic core - and F(0) - the membrane proton channel. F(1) has five subunits: alpha(3), beta(3), gamma(1), delta(1), epsilon(1). F(0) has four main subunits: a(1), b(1), b'(1) and c(10-14). The alpha and beta chains form an alternating ring which encloses part of the gamma chain. F(1) is attached to F(0) by a central stalk formed by the gamma and epsilon chains, while a peripheral stalk is formed by the delta, b and b' chains.

It is found in the cellular thylakoid membrane. Functionally, f(1)F(0) ATP synthase produces ATP from ADP in the presence of a proton or sodium gradient. F-type ATPases consist of two structural domains, F(1) containing the extramembraneous catalytic core and F(0) containing the membrane proton channel, linked together by a central stalk and a peripheral stalk. During catalysis, ATP synthesis in the catalytic domain of F(1) is coupled via a rotary mechanism of the central stalk subunits to proton translocation. Component of the F(0) channel, it forms part of the peripheral stalk, linking F(1) to F(0). This Prochlorococcus marinus (strain MIT 9215) protein is ATP synthase subunit b.